Here is a 55-residue protein sequence, read N- to C-terminus: Large ribosomal subunit protein bL33 (55 aa).

Belongs to the bacterial ribosomal protein bL33 family.

The polypeptide is Large ribosomal subunit protein bL33 (Burkholderia ambifaria (strain MC40-6)).